A 160-amino-acid polypeptide reads, in one-letter code: Putative 4-hydroxy-4-methyl-2-oxoglutarate aldolase (160 aa).

Residues Gly75 to Leu78 and Arg97 each bind substrate. Asp98 serves as a coordination point for a divalent metal cation.

This sequence belongs to the class II aldolase/RraA-like family. Homotrimer. A divalent metal cation serves as cofactor.

It catalyses the reaction 4-hydroxy-4-methyl-2-oxoglutarate = 2 pyruvate. The enzyme catalyses oxaloacetate + H(+) = pyruvate + CO2. In terms of biological role, catalyzes the aldol cleavage of 4-hydroxy-4-methyl-2-oxoglutarate (HMG) into 2 molecules of pyruvate. Also contains a secondary oxaloacetate (OAA) decarboxylase activity due to the common pyruvate enolate transition state formed following C-C bond cleavage in the retro-aldol and decarboxylation reactions. The polypeptide is Putative 4-hydroxy-4-methyl-2-oxoglutarate aldolase (Vibrio vulnificus (strain YJ016)).